The following is a 548-amino-acid chain: Chaperonin GroEL (548 aa).

ATP contacts are provided by residues 30–33, lysine 51, 87–91, glycine 415, and aspartate 495; these read TLGP and DGTTT.

Belongs to the chaperonin (HSP60) family. Forms a cylinder of 14 subunits composed of two heptameric rings stacked back-to-back. Interacts with the co-chaperonin GroES.

The protein localises to the cytoplasm. It catalyses the reaction ATP + H2O + a folded polypeptide = ADP + phosphate + an unfolded polypeptide.. Its function is as follows. Together with its co-chaperonin GroES, plays an essential role in assisting protein folding. The GroEL-GroES system forms a nano-cage that allows encapsulation of the non-native substrate proteins and provides a physical environment optimized to promote and accelerate protein folding. This is Chaperonin GroEL from Idiomarina loihiensis (strain ATCC BAA-735 / DSM 15497 / L2-TR).